A 334-amino-acid polypeptide reads, in one-letter code: MRIGVIGLGRIGTIHAENLKMIDDAILYAISDVREDRLREMKEKLGVEKAYKDPHELIEDPNVDAVLVCSSTNTHSELVIACAKAKKHVFCEKPLSLNLADVDRMIEETKKADVILFTGFNRRFDRNFKKLKEAVENGTIGKPHVLRITSRDPAPPPLDYIRVSGGIFLDMTIHDFDMARYIMGEEVEEVFADGSVLVDEEIGKAGDVDTAVVVLRFKSGALGVIDNSRRAVYGYDQRIEVFGSKGRIFADNVRETTVVLTDEQGDRGSRYLYFFLERYRDSYLEELKTFIKNVKSGEPPAVSGEDGKMALLLGYAAKKSLEEKRSVKLEEVIG.

The protein belongs to the Gfo/Idh/MocA family.

It catalyses the reaction myo-inositol + NAD(+) = scyllo-inosose + NADH + H(+). The protein operates within polyol metabolism; myo-inositol metabolism. Its function is as follows. Catalyzes the NAD(+)-dependent oxidation of myo-inositol (MI) to 2-keto-myo-inositol (scyllo-inosose), and thus probably functions in a myo-inositol degradation pathway together with IolM, IolN and IolO. Has no activity with scyllo-inositol and much reduced activity (78-fold lower catalytic efficiency) with 1D-chiro-inositol. The chain is Myo-inositol 2-dehydrogenase from Thermotoga maritima (strain ATCC 43589 / DSM 3109 / JCM 10099 / NBRC 100826 / MSB8).